The chain runs to 94 residues: Large ribosomal subunit protein bL27 (94 aa).

The propeptide occupies 1–9; sequence MLKMNLQFF.

It belongs to the bacterial ribosomal protein bL27 family. The N-terminus is cleaved by ribosomal processing cysteine protease Prp.

The sequence is that of Large ribosomal subunit protein bL27 from Halalkalibacterium halodurans (strain ATCC BAA-125 / DSM 18197 / FERM 7344 / JCM 9153 / C-125) (Bacillus halodurans).